A 137-amino-acid chain; its full sequence is Large ribosomal subunit protein uL16 (137 aa).

Belongs to the universal ribosomal protein uL16 family. As to quaternary structure, part of the 50S ribosomal subunit.

In terms of biological role, binds 23S rRNA and is also seen to make contacts with the A and possibly P site tRNAs. The sequence is that of Large ribosomal subunit protein uL16 from Bradyrhizobium sp. (strain ORS 278).